Consider the following 904-residue polypeptide: Endoplasmic reticulum metallopeptidase 1 (904 aa).

Residue Met1 is modified to N-acetylmethionine. Residues 1–63 are Cytoplasmic-facing; the sequence is MEWGSESAAV…PGGSGGASRG (63 aa). The interval 1–65 is disordered; the sequence is MEWGSESAAV…GSGGASRGAG (65 aa). Gly residues predominate over residues 55 to 65; sequence GGSGGASRGAG. Residues 64-84 traverse the membrane as a helical segment; it reads AGTGLSEVRAALGLALYLIAL. At 85-399 the chain is on the lumenal side; it reads RTLVQLSLQQ…AASKYRHGNM (315 aa). The N-linked (GlcNAc...) asparagine glycan is linked to Asn182. Residues Cys204 and Cys222 are joined by a disulfide bond. Zn(2+) is bound by residues His205 and Asp217. Residue Glu251 is the Proton acceptor of the active site. Zn(2+) contacts are provided by Glu252, Glu278, and His354. The chain crosses the membrane as a helical span at residues 400–420; sequence VFFDVLGLFVIAYPSRIGSII. The Cytoplasmic portion of the chain corresponds to 421–457; it reads NYMVVMGVVLYLGKKFLQPKHKTGNYKKDFLCGLGIT. Residues 458-478 traverse the membrane as a helical segment; sequence LISWFTSLVTVLIIAVFISLI. Topologically, residues 479–489 are lumenal; the sequence is GQSLSWYNHFY. A helical membrane pass occupies residues 490-510; that stretch reads VSVCLYGTATVAKIILIHTLA. The Cytoplasmic segment spans residues 511–519; the sequence is KRFYYMNAS. A helical membrane pass occupies residues 520 to 540; the sequence is AQYLGEVFFDISLFVHCCFLV. A topological domain (lumenal) is located at residue Thr541. A helical membrane pass occupies residues 542–562; it reads LTYQGLCSAFISAVWVAFPLL. The Cytoplasmic segment spans residues 563–579; the sequence is TKLCVHKDFKQHGAQGK. A helical membrane pass occupies residues 580–600; it reads FIAFYLLGMFIPYLYALYLIW. Over 601–621 the chain is Lumenal; it reads AVFEMFTPILGRSGSEIPPDV. Residues 622 to 642 traverse the membrane as a helical segment; that stretch reads VLASILAGCTMILSSYFINFI. Residues 643-651 lie on the Cytoplasmic side of the membrane; the sequence is YLAKSTKKT. The helical transmembrane segment at 652-672 threads the bilayer; it reads MLTLTLVCAITFLLVCSGTFF. Residues 673–904 lie on the Lumenal side of the membrane; the sequence is PYSSNPANPK…WVCTYDLFVF (232 aa). Asn730 carries N-linked (GlcNAc...) asparagine glycosylation.

This sequence belongs to the peptidase M28 family. Zn(2+) serves as cofactor.

It is found in the endoplasmic reticulum membrane. Functionally, within the ovary, required for the organization of somatic cells and oocytes into discrete follicular structures. The polypeptide is Endoplasmic reticulum metallopeptidase 1 (Homo sapiens (Human)).